The sequence spans 830 residues: Penicillin-binding protein 1A (830 aa).

The segment covering 1–17 has biased composition (basic residues); sequence MTERKREHKDRKQKKNS. Residues 1–20 form a disordered region; that stretch reads MTERKREHKDRKQKKNSPKN. Residues 1–30 are Cytoplasmic-facing; the sequence is MTERKREHKDRKQKKNSPKNQSKVTKFLKW. Residues 31-51 traverse the membrane as a helical; Signal-anchor for type II membrane protein segment; sequence FFIGILLLGITAVTVVGIYVL. Residues 52-830 lie on the Extracellular side of the membrane; sequence SIIRSSPELD…QNGQNNNITQ (779 aa). The segment at 72-244 is transglycosylase; the sequence is SILYDDQGNF…PTSYDGLSEA (173 aa). Glu111 acts as the Proton donor; for transglycosylase activity in catalysis. The transpeptidase stretch occupies residues 378–663; that stretch reads ASATIIDYKT…TSPIFGKIMG (286 aa). Ser417 (acyl-ester intermediate; for transpeptidase activity) is an active-site residue. The interval 731 to 830 is disordered; it reads APDTNDNNNS…QNGQNNNITQ (100 aa). Residues 735–746 are compositionally biased toward low complexity; that stretch reads NDNNNSGANEGN. A compositionally biased stretch (basic and acidic residues) spans 747–758; the sequence is KQQETKPEEVKP. Composition is skewed to low complexity over residues 759–807 and 816–830; these read NENN…NTNN and GNNQ…NITQ.

In the N-terminal section; belongs to the glycosyltransferase 51 family. This sequence in the C-terminal section; belongs to the transpeptidase family.

It is found in the cell membrane. It carries out the reaction [GlcNAc-(1-&gt;4)-Mur2Ac(oyl-L-Ala-gamma-D-Glu-L-Lys-D-Ala-D-Ala)](n)-di-trans,octa-cis-undecaprenyl diphosphate + beta-D-GlcNAc-(1-&gt;4)-Mur2Ac(oyl-L-Ala-gamma-D-Glu-L-Lys-D-Ala-D-Ala)-di-trans,octa-cis-undecaprenyl diphosphate = [GlcNAc-(1-&gt;4)-Mur2Ac(oyl-L-Ala-gamma-D-Glu-L-Lys-D-Ala-D-Ala)](n+1)-di-trans,octa-cis-undecaprenyl diphosphate + di-trans,octa-cis-undecaprenyl diphosphate + H(+). The enzyme catalyses Preferential cleavage: (Ac)2-L-Lys-D-Ala-|-D-Ala. Also transpeptidation of peptidyl-alanyl moieties that are N-acyl substituents of D-alanine.. Its pathway is cell wall biogenesis; peptidoglycan biosynthesis. Its function is as follows. Cell wall formation. Synthesis of cross-linked peptidoglycan from the lipid intermediates. The enzyme has a penicillin-insensitive transglycosylase N-terminal domain (formation of linear glycan strands) and a penicillin-sensitive transpeptidase C-terminal domain (cross-linking of the peptide subunits). This Clostridium perfringens (strain ATCC 13124 / DSM 756 / JCM 1290 / NCIMB 6125 / NCTC 8237 / Type A) protein is Penicillin-binding protein 1A (pbpA).